Here is a 134-residue protein sequence, read N- to C-terminus: Thyrotropin subunit beta (134 aa).

The first 16 residues, 1–16 (MSPFFMMSLLFGLTFG), serve as a signal peptide directing secretion. Intrachain disulfides connect C22–C72, C36–C87, C39–C125, C47–C103, C51–C105, and C108–C115. A glycan (N-linked (GlcNAc...) asparagine) is linked at N43.

The protein belongs to the glycoprotein hormones subunit beta family. In terms of assembly, heterodimer of a common alpha chain and a unique beta chain which confers biological specificity to thyrotropin, lutropin, follitropin and gonadotropin.

It is found in the secreted. Functionally, indispensable for the control of thyroid structure and metabolism. The polypeptide is Thyrotropin subunit beta (TSHB) (Gallus gallus (Chicken)).